The sequence spans 82 residues: Conotoxin Cal30 (82 aa).

Residues methionine 1 to serine 19 form the signal peptide.

Post-translationally, may contain 5 disulfide bonds. In terms of tissue distribution, expressed by the venom duct.

The protein localises to the secreted. Functionally, probable neurotoxin. The sequence is that of Conotoxin Cal30 from Californiconus californicus (California cone).